A 626-amino-acid chain; its full sequence is Threonine--tRNA ligase (626 aa).

The interval 1–145 (MRMLLIHSDY…SRTIVPEKAV (145 aa)) is editing domain. The tract at residues 207-506 (PHVRLMLEQE…QEKGIKPMYP (300 aa)) is catalytic. Zn(2+) contacts are provided by C299, H351, and H475.

It belongs to the class-II aminoacyl-tRNA synthetase family. Homodimer. Zn(2+) serves as cofactor.

The protein resides in the cytoplasm. It catalyses the reaction tRNA(Thr) + L-threonine + ATP = L-threonyl-tRNA(Thr) + AMP + diphosphate + H(+). In terms of biological role, catalyzes the attachment of threonine to tRNA(Thr) in a two-step reaction: L-threonine is first activated by ATP to form Thr-AMP and then transferred to the acceptor end of tRNA(Thr). Also edits incorrectly charged L-seryl-tRNA(Thr). In Thermococcus kodakarensis (strain ATCC BAA-918 / JCM 12380 / KOD1) (Pyrococcus kodakaraensis (strain KOD1)), this protein is Threonine--tRNA ligase.